We begin with the raw amino-acid sequence, 192 residues long: Putative manganese efflux pump MntP (192 aa).

6 helical membrane-spanning segments follow: residues 3–23 (FSAILLLALGLAMDATAVAAA), 36–56 (VLLVAGFFGGAQALMPVIGWL), 65–85 (VQAWDHWIAFVLLAFIGGKML), 112–132 (FVLAIATSIDALAVGITLPML), 136–156 (FAISVVTIGVVTALLSAAGLF), and 171–191 (LAGGVVLIGLGFKILLEHLVL).

The protein belongs to the MntP (TC 9.B.29) family.

Its subcellular location is the cell inner membrane. Probably functions as a manganese efflux pump. This is Putative manganese efflux pump MntP from Sorangium cellulosum (strain So ce56) (Polyangium cellulosum (strain So ce56)).